The following is a 463-amino-acid chain: Probable diacyglycerol O-acyltransferase tgs1 (463 aa).

His137 functions as the Proton acceptor in the catalytic mechanism.

The protein belongs to the long-chain O-acyltransferase family.

The catalysed reaction is an acyl-CoA + a 1,2-diacyl-sn-glycerol = a triacyl-sn-glycerol + CoA. It participates in glycerolipid metabolism; triacylglycerol biosynthesis. In terms of biological role, catalyzes the terminal and only committed step in triacylglycerol synthesis by using diacylglycerol and fatty acyl CoA as substrates. Required for storage lipid synthesis. The polypeptide is Probable diacyglycerol O-acyltransferase tgs1 (tgs1) (Mycobacterium tuberculosis (strain CDC 1551 / Oshkosh)).